The primary structure comprises 147 residues: FAD synthase (147 aa).

ATP-binding positions include threonine 13–phenylalanine 14, histidine 18–histidine 21, aspartate 100, and phenylalanine 127.

This sequence belongs to the archaeal FAD synthase family. In terms of assembly, homodimer. A divalent metal cation is required as a cofactor.

The catalysed reaction is FMN + ATP + H(+) = FAD + diphosphate. It participates in cofactor biosynthesis; FAD biosynthesis; FAD from FMN: step 1/1. Catalyzes the transfer of the AMP portion of ATP to flavin mononucleotide (FMN) to produce flavin adenine dinucleotide (FAD) coenzyme. The protein is FAD synthase of Korarchaeum cryptofilum (strain OPF8).